Reading from the N-terminus, the 164-residue chain is FGFHQQMLNYILSPFFYYQPDPWLTHKWKDEKRNMRKHSISFKGLIRAVLFSQTLIKSALAKRVRCTVLYATETGKSKTLAKKLNTMMNYAFSSKVVCMEDYNFSELEKESLLFVVTSTFGNGDCPGNGESFKKQLLSLNNLRNQVRYSVFGLGSRMYPHFCAF.

Residue Phe-3 coordinates (6R)-L-erythro-5,6,7,8-tetrahydrobiopterin. Tyr-18 provides a ligand contact to heme b. The tract at residues 42 to 62 (FKGLIRAVLFSQTLIKSALAK) is calmodulin-binding. The Flavodoxin-like domain occupies 66–164 (CTVLYATETG…SRMYPHFCAF (99 aa)). FMN is bound by residues Thr-72, Glu-73, Thr-74, Lys-76, Ser-77, Ser-118, Thr-119, Ser-155, and Cys-162.

Belongs to the NOS family. In terms of assembly, homodimer. The cofactor is heme b. FAD serves as cofactor. It depends on FMN as a cofactor. (6R)-L-erythro-5,6,7,8-tetrahydrobiopterin is required as a cofactor.

The protein localises to the cytoplasm. The protein resides in the cytosol. It catalyses the reaction 2 L-arginine + 3 NADPH + 4 O2 + H(+) = 2 L-citrulline + 2 nitric oxide + 3 NADP(+) + 4 H2O. With respect to regulation, not stimulated by calcium/calmodulin. Produces nitric oxide (NO) which is a messenger molecule with diverse functions throughout the body. In macrophages, NO mediates tumoricidal and bactericidal actions. Also has nitrosylase activity and mediates cysteine S-nitrosylation of cytoplasmic target proteins such COX2. The protein is Nitric oxide synthase, inducible (nos2) of Carassius auratus (Goldfish).